The sequence spans 98 residues: MALTKADIAEHLFTQLGMSKREAKDMVEAFFEEIRQALERGEQVKISGFGNFDLREKNQRPGRNPKTGEDIPISARRVVTFRPGQKLKARVENVEPNE.

The disordered stretch occupies residues 52 to 73; it reads FDLREKNQRPGRNPKTGEDIPI.

Belongs to the bacterial histone-like protein family. As to quaternary structure, heterodimer of an alpha and a beta chain.

This protein is one of the two subunits of integration host factor, a specific DNA-binding protein that functions in genetic recombination as well as in transcriptional and translational control. This Aeromonas hydrophila subsp. hydrophila (strain ATCC 7966 / DSM 30187 / BCRC 13018 / CCUG 14551 / JCM 1027 / KCTC 2358 / NCIMB 9240 / NCTC 8049) protein is Integration host factor subunit alpha.